The sequence spans 179 residues: Large ribosomal subunit protein uL5 (179 aa).

Belongs to the universal ribosomal protein uL5 family. Part of the 50S ribosomal subunit; part of the 5S rRNA/L5/L18/L25 subcomplex. Contacts the 5S rRNA and the P site tRNA. Forms a bridge to the 30S subunit in the 70S ribosome.

Functionally, this is one of the proteins that bind and probably mediate the attachment of the 5S RNA into the large ribosomal subunit, where it forms part of the central protuberance. In the 70S ribosome it contacts protein S13 of the 30S subunit (bridge B1b), connecting the 2 subunits; this bridge is implicated in subunit movement. Contacts the P site tRNA; the 5S rRNA and some of its associated proteins might help stabilize positioning of ribosome-bound tRNAs. The polypeptide is Large ribosomal subunit protein uL5 (Thiobacillus denitrificans (strain ATCC 25259 / T1)).